The primary structure comprises 474 residues: Glutamate--tRNA ligase 1 (474 aa).

The 'HIGH' region signature appears at 11-21 (PSPTGFLHIGG). A compositionally biased stretch (basic and acidic residues) spans 113 to 133 (TARAEGRAPRYDGRWRDRDPS). Positions 113–136 (TARAEGRAPRYDGRWRDRDPSEAP) are disordered. The 'KMSKS' region motif lies at 240-244 (KLSKR). Lysine 243 serves as a coordination point for ATP.

Belongs to the class-I aminoacyl-tRNA synthetase family. Glutamate--tRNA ligase type 1 subfamily. In terms of assembly, monomer.

It is found in the cytoplasm. The enzyme catalyses tRNA(Glu) + L-glutamate + ATP = L-glutamyl-tRNA(Glu) + AMP + diphosphate. Catalyzes the attachment of glutamate to tRNA(Glu) in a two-step reaction: glutamate is first activated by ATP to form Glu-AMP and then transferred to the acceptor end of tRNA(Glu). The chain is Glutamate--tRNA ligase 1 from Methylorubrum extorquens (strain PA1) (Methylobacterium extorquens).